The following is a 58-amino-acid chain: Large ribosomal subunit protein eL20 (58 aa).

The tract at residues 37–58 (TTVGSQHNRKRPQIEIKEVSAA) is disordered. The span at 48–58 (PQIEIKEVSAA) shows a compositional bias: basic and acidic residues.

The protein belongs to the eukaryotic ribosomal protein eL20 family. In terms of assembly, part of the 50S ribosomal subunit. Binds 23S rRNA.

This chain is Large ribosomal subunit protein eL20, found in Halorubrum lacusprofundi (strain ATCC 49239 / DSM 5036 / JCM 8891 / ACAM 34).